The sequence spans 343 residues: tRNA N6-adenosine threonylcarbamoyltransferase (343 aa).

Residues H120 and H124 each contribute to the Fe cation site. Substrate-binding positions include 142 to 146 (VVSGG), D175, G188, D192, and N281. D310 is a Fe cation binding site.

The protein belongs to the KAE1 / TsaD family. Requires Fe(2+) as cofactor.

The protein resides in the cytoplasm. The catalysed reaction is L-threonylcarbamoyladenylate + adenosine(37) in tRNA = N(6)-L-threonylcarbamoyladenosine(37) in tRNA + AMP + H(+). In terms of biological role, required for the formation of a threonylcarbamoyl group on adenosine at position 37 (t(6)A37) in tRNAs that read codons beginning with adenine. Is involved in the transfer of the threonylcarbamoyl moiety of threonylcarbamoyl-AMP (TC-AMP) to the N6 group of A37, together with TsaE and TsaB. TsaD likely plays a direct catalytic role in this reaction. The protein is tRNA N6-adenosine threonylcarbamoyltransferase of Bacillus cereus (strain ATCC 14579 / DSM 31 / CCUG 7414 / JCM 2152 / NBRC 15305 / NCIMB 9373 / NCTC 2599 / NRRL B-3711).